Consider the following 416-residue polypeptide: Phosphoglycerate kinase (416 aa).

Residues Val-23, Asp-24, Phe-25, Asn-26, Gln-38, Arg-39, Ser-62, His-63, Gly-65, Arg-66, Leu-121, Arg-122, His-168, and Arg-169 each contribute to the (2R)-3-phosphoglycerate site. Gly-212 contacts ADP. Gly-212 is a CDP binding site. The AMP site is built by Ala-213 and Lys-214. An ATP-binding site is contributed by Ala-213. A Mg(2+)-binding site is contributed by Ala-213. Residues Ala-216 and Asp-217 each coordinate Mg(2+). Asp-217 contacts CDP. Lys-218 provides a ligand contact to AMP. Position 218 (Lys-218) interacts with ATP. Gly-236 contacts ADP. A CDP-binding site is contributed by Gly-236. 2 residues coordinate AMP: Gly-237 and Gly-311. ATP is bound by residues Gly-237 and Gly-311. Residues Gly-336 and Phe-341 each contribute to the CDP site. Phe-341 contributes to the ADP binding site. AMP is bound at residue Glu-342. ATP contacts are provided by Glu-342, Asp-373, and Thr-374. Position 373 (Asp-373) interacts with Mg(2+).

It belongs to the phosphoglycerate kinase family. As to quaternary structure, monomer. It depends on Mg(2+) as a cofactor.

The protein resides in the cytoplasm. Its subcellular location is the mitochondrion. The enzyme catalyses (2R)-3-phosphoglycerate + ATP = (2R)-3-phospho-glyceroyl phosphate + ADP. Its pathway is carbohydrate degradation; glycolysis; pyruvate from D-glyceraldehyde 3-phosphate: step 2/5. Catalyzes one of the two ATP producing reactions in the glycolytic pathway via the reversible conversion of 1,3-diphosphoglycerate to 3-phosphoglycerate. Both L- and D- forms of purine and pyrimidine nucleotides can be used as substrates, but the activity is much lower on pyrimidines. Negatively regulates the biosynthesis of acetyl-CoA from pyruvate in the mitochondrion. In Candida glabrata (strain ATCC 2001 / BCRC 20586 / JCM 3761 / NBRC 0622 / NRRL Y-65 / CBS 138) (Yeast), this protein is Phosphoglycerate kinase (PGK1).